Consider the following 423-residue polypeptide: MDQITEFQLDINRALKETLALVLAGGRGSRLRDLTNRESKPAVPFGGKYRIIDFPLSNCMNSGIRRMCVITQYRAHTLIHHIQRGWGFLRAEIGEFVELWPAQQQTDKESWYLGTADAVHQNLDLIRMHDPRFVLILAGDHIYKQDYSKLLAHHIARGSDCTVACVDVPREEATGYGCVEVDNDDNIVHFLEKPANPPGIPGRPDRAFASMGIYIFNADFLYEILESDALNEASQHDFGRDIIPSQVGKARIVAHRFSQSCVYSVGRREPYWRDVGTVDAYWSANIDLVSVTPALDLYDADWPIWTYQMQRPPAKFVFDTDERRGMAKDSLVSAGCIVSGGAVTGSLLFNDVRVNSYSSVIDTVILPMGDIGRHARLTKCILDTGCRIPEGLVIGEDPILDAKRFHVTEQGITLVTPDRLALL.

Alpha-D-glucose 1-phosphate-binding positions include tyrosine 112, glycine 177, 192 to 193, and serine 210; that span reads EK.

It belongs to the bacterial/plant glucose-1-phosphate adenylyltransferase family. As to quaternary structure, homotetramer.

It catalyses the reaction alpha-D-glucose 1-phosphate + ATP + H(+) = ADP-alpha-D-glucose + diphosphate. It participates in glycan biosynthesis; glycogen biosynthesis. In terms of biological role, involved in the biosynthesis of ADP-glucose, a building block required for the elongation reactions to produce glycogen. Catalyzes the reaction between ATP and alpha-D-glucose 1-phosphate (G1P) to produce pyrophosphate and ADP-Glc. This chain is Glucose-1-phosphate adenylyltransferase, found in Rhodospirillum rubrum (strain ATCC 11170 / ATH 1.1.1 / DSM 467 / LMG 4362 / NCIMB 8255 / S1).